Reading from the N-terminus, the 248-residue chain is ATP synthase subunit a (248 aa).

Residues 1-3 constitute a propeptide, removed in mature form; the sequence is MLY. The next 7 membrane-spanning stretches (helical) occupy residues 24 to 44, 86 to 106, 117 to 137, 146 to 166, 183 to 203, 205 to 225, and 227 to 247; these read MSLT…FFIF, IYMP…LVGL, FALP…IGFV, VLLP…VELL, ITSG…TSGI, LLFV…ELIV, and ILQA…SLIL.

The protein belongs to the ATPase A chain family. As to quaternary structure, F-type ATPases have 2 components, CF(1) - the catalytic core - and CF(0) - the membrane proton channel. CF(1) has five subunits: alpha(3), beta(3), gamma(1), delta(1), epsilon(1). CF(0) has three main subunits: a, b and c.

It is found in the mitochondrion inner membrane. Functionally, mitochondrial membrane ATP synthase (F(1)F(0) ATP synthase or Complex V) produces ATP from ADP in the presence of a proton gradient across the membrane which is generated by electron transport complexes of the respiratory chain. F-type ATPases consist of two structural domains, F(1) - containing the extramembraneous catalytic core and F(0) - containing the membrane proton channel, linked together by a central stalk and a peripheral stalk. During catalysis, ATP synthesis in the catalytic domain of F(1) is coupled via a rotary mechanism of the central stalk subunits to proton translocation. Key component of the proton channel; it may play a direct role in the translocation of protons across the membrane. The protein is ATP synthase subunit a of Zancudomyces culisetae (Gut fungus).